We begin with the raw amino-acid sequence, 282 residues long: Prohibitin-1 (282 aa).

Positions 106–109 (YQNL) match the AIM motif.

Belongs to the prohibitin family. The mitochondrial prohibitin complex consists of two subunits (phb1 and phb2). The subunits assemble into a membrane-associated ring-shaped supercomplex of approximately 1 mDa.

The protein localises to the mitochondrion inner membrane. It localises to the cytoplasm. In terms of biological role, prohibitin probably acts as a holdase/unfoldase for the stabilization of newly synthesized mitochondrial proteins. Involved in mitophagy; may act as an adapter for atg8 that supports mitophagosome assembly. Negatively regulates the proteolytic processing of atg32 via the i-AAA protease. Acts as a negative regulator of the m-AAA protease. This is Prohibitin-1 (phb1) from Schizosaccharomyces pombe (strain 972 / ATCC 24843) (Fission yeast).